Reading from the N-terminus, the 372-residue chain is Cytochrome b (372 aa).

The next 4 helical transmembrane spans lie at 25–45, 69–90, 105–125, and 170–190; these read FGSM…FLSM, WMMQ…YIHV, WLSG…GYVL, and FFAL…LHIM. Positions 75 and 89 each coordinate heme b. 2 residues coordinate heme b: His174 and His188. A ubiquinone is bound at residue His193. Transmembrane regions (helical) follow at residues 218 to 238, 280 to 300, 312 to 332, and 339 to 358; these read YKDL…ISFI, LGGA…PFTH, FMQL…WTAT, and YTMI…MSNP.

Belongs to the cytochrome b family. As to quaternary structure, the cytochrome bc1 complex contains 3 respiratory subunits (MT-CYB, CYC1 and UQCRFS1), 2 core proteins (UQCRC1 and UQCRC2) and probably 6 low-molecular weight proteins. Heme b serves as cofactor.

It localises to the mitochondrion inner membrane. Its function is as follows. Component of the ubiquinol-cytochrome c reductase complex (complex III or cytochrome b-c1 complex) that is part of the mitochondrial respiratory chain. The b-c1 complex mediates electron transfer from ubiquinol to cytochrome c. Contributes to the generation of a proton gradient across the mitochondrial membrane that is then used for ATP synthesis. The protein is Cytochrome b (MT-CYB) of Acrantophis madagascariensis (Madagascar ground boa).